Here is a 155-residue protein sequence, read N- to C-terminus: Ribosomal RNA large subunit methyltransferase H (155 aa).

S-adenosyl-L-methionine-binding positions include L72, G103, and 122 to 127; that span reads FGRMVW.

This sequence belongs to the RNA methyltransferase RlmH family. Homodimer.

The protein localises to the cytoplasm. The enzyme catalyses pseudouridine(1915) in 23S rRNA + S-adenosyl-L-methionine = N(3)-methylpseudouridine(1915) in 23S rRNA + S-adenosyl-L-homocysteine + H(+). In terms of biological role, specifically methylates the pseudouridine at position 1915 (m3Psi1915) in 23S rRNA. This Paracoccus denitrificans (strain Pd 1222) protein is Ribosomal RNA large subunit methyltransferase H.